A 494-amino-acid chain; its full sequence is Glutamyl-tRNA reductase (494 aa).

Residues 58–61 (TCNR), S118, 123–125 (EQQ), and Q129 each bind substrate. C59 acts as the Nucleophile in catalysis. 205 to 210 (GAGAMA) contacts NADP(+). A disordered region spans residues 448 to 494 (KGANAGSGQRKKQKPQENRVSTARAVYRSTYQDLTQASTPGGKDDDQ). The span at 476–486 (STYQDLTQAST) shows a compositional bias: polar residues.

Belongs to the glutamyl-tRNA reductase family. Homodimer.

The catalysed reaction is (S)-4-amino-5-oxopentanoate + tRNA(Glu) + NADP(+) = L-glutamyl-tRNA(Glu) + NADPH + H(+). Its pathway is porphyrin-containing compound metabolism; protoporphyrin-IX biosynthesis; 5-aminolevulinate from L-glutamyl-tRNA(Glu): step 1/2. Functionally, catalyzes the NADPH-dependent reduction of glutamyl-tRNA(Glu) to glutamate 1-semialdehyde (GSA). The chain is Glutamyl-tRNA reductase from Corynebacterium urealyticum (strain ATCC 43042 / DSM 7109).